Reading from the N-terminus, the 619-residue chain is DBH-like monooxygenase protein 2 (619 aa).

The first 21 residues, 1 to 21, serve as a signal peptide directing secretion; the sequence is MACVLLFRLFLLLVLAAFSQG. The Extracellular segment spans residues 22-594; it reads KRLGPTSPLR…LSGSNTATLR (573 aa). The DOMON domain maps to 40–156; the sequence is RAVFLRWDFD…DTMRVLAAYG (117 aa). Tyr209 is an active-site residue. 2 disulfide bridges follow: Cys211/Cys261 and Cys248/Cys271. The Cu cation site is built by His241 and His242. Residue Asn250 is glycosylated (N-linked (GlcNAc...) asparagine). The Cu cation site is built by His309, His390, and His392. 2 disulfide bridges follow: Cys366–Cys481 and Cys444–Cys466. His390 is an active-site residue. A glycan (N-linked (GlcNAc...) asparagine) is linked at Asn405. Met465 lines the Cu cation pocket. Asn477 carries an N-linked (GlcNAc...) asparagine glycan. A helical membrane pass occupies residues 595–615; that stretch reads PLPMIAVLFLQGSLSCLLAML. At 616 to 619 the chain is on the cytoplasmic side; it reads QTGV.

It belongs to the copper type II ascorbate-dependent monooxygenase family. Requires Cu(2+) as cofactor. As to expression, expressed at low levels in thymus and testis.

It is found in the membrane. The sequence is that of DBH-like monooxygenase protein 2 (Moxd2) from Mus musculus (Mouse).